The following is a 131-amino-acid chain: Urease subunit beta (131 aa).

The tract at residues 100–131 (PLDPAAGVTSDEDAASAVVPRGAETSEREARA) is disordered.

This sequence belongs to the urease beta subunit family. Heterotrimer of UreA (gamma), UreB (beta) and UreC (alpha) subunits. Three heterotrimers associate to form the active enzyme.

The protein localises to the cytoplasm. The catalysed reaction is urea + 2 H2O + H(+) = hydrogencarbonate + 2 NH4(+). Its pathway is nitrogen metabolism; urea degradation; CO(2) and NH(3) from urea (urease route): step 1/1. This Kocuria rhizophila (strain ATCC 9341 / DSM 348 / NBRC 103217 / DC2201) protein is Urease subunit beta.